A 70-amino-acid polypeptide reads, in one-letter code: DNA-directed RNA polymerase subunit omega (70 aa).

Belongs to the RNA polymerase subunit omega family. In terms of assembly, the RNAP catalytic core consists of 2 alpha, 1 beta, 1 beta' and 1 omega subunit. When a sigma factor is associated with the core the holoenzyme is formed, which can initiate transcription.

It carries out the reaction RNA(n) + a ribonucleoside 5'-triphosphate = RNA(n+1) + diphosphate. Its function is as follows. Promotes RNA polymerase assembly. Latches the N- and C-terminal regions of the beta' subunit thereby facilitating its interaction with the beta and alpha subunits. In Marinobacter nauticus (strain ATCC 700491 / DSM 11845 / VT8) (Marinobacter aquaeolei), this protein is DNA-directed RNA polymerase subunit omega.